The following is a 343-amino-acid chain: Cilia- and flagella-associated protein 36 (343 aa).

2 positions are modified to phosphoserine: S85 and S147. Residues 147 to 181 (SDLEQEEMKILREVLRKSKEEYDQEEERKRKKQSS) are a coiled coil. The segment at 165-191 (KEEYDQEEERKRKKQSSEGKMEEPPIY) is disordered. S201 is subject to Phosphoserine. The tract at residues 286–323 (SMRKDMRAKQIQNTEQKGKPTREAEEMTEKPEMTAEEK) is disordered. Residues 301–323 (QKGKPTREAEEMTEKPEMTAEEK) are compositionally biased toward basic and acidic residues.

Belongs to the CFAP36 family. As to quaternary structure, interacts with ARL3. In terms of tissue distribution, widely expressed (at protein level).

Its subcellular location is the nucleus. The protein resides in the cytoplasm. The protein localises to the cell projection. It localises to the cilium. It is found in the flagellum. Functionally, may act as an effector for ARL3. The polypeptide is Cilia- and flagella-associated protein 36 (Rattus norvegicus (Rat)).